We begin with the raw amino-acid sequence, 199 residues long: Small ribosomal subunit protein uS4 (199 aa).

Residues 94-157 (SRLDNIVYRM…QNVPTILASI (64 aa)) enclose the S4 RNA-binding domain.

This sequence belongs to the universal ribosomal protein uS4 family. Part of the 30S ribosomal subunit. Contacts protein S5. The interaction surface between S4 and S5 is involved in control of translational fidelity.

In terms of biological role, one of the primary rRNA binding proteins, it binds directly to 16S rRNA where it nucleates assembly of the body of the 30S subunit. Functionally, with S5 and S12 plays an important role in translational accuracy. The protein is Small ribosomal subunit protein uS4 of Mycoplasma mobile (strain ATCC 43663 / 163K / NCTC 11711) (Mesomycoplasma mobile).